The primary structure comprises 149 residues: Large ribosomal subunit protein bL9 (149 aa).

It belongs to the bacterial ribosomal protein bL9 family.

In terms of biological role, binds to the 23S rRNA. The chain is Large ribosomal subunit protein bL9 from Legionella pneumophila (strain Lens).